A 245-amino-acid chain; its full sequence is tRNA pseudouridine synthase A (245 aa).

The Nucleophile role is filled by aspartate 52. Tyrosine 111 lines the substrate pocket.

Belongs to the tRNA pseudouridine synthase TruA family. As to quaternary structure, homodimer.

It catalyses the reaction uridine(38/39/40) in tRNA = pseudouridine(38/39/40) in tRNA. Its function is as follows. Formation of pseudouridine at positions 38, 39 and 40 in the anticodon stem and loop of transfer RNAs. The polypeptide is tRNA pseudouridine synthase A (Rhodopseudomonas palustris (strain BisB18)).